The sequence spans 198 residues: Proteasome subunit beta 1 (198 aa).

Positions methionine 1–alanine 6 are cleaved as a propeptide — removed in mature form; by autocatalysis. Threonine 7 functions as the Nucleophile in the catalytic mechanism.

The protein belongs to the peptidase T1B family. In terms of assembly, the 20S proteasome core is composed of 14 alpha and 14 beta subunits that assemble into four stacked heptameric rings, resulting in a barrel-shaped structure. The two inner rings, each composed of seven catalytic beta subunits, are sandwiched by two outer rings, each composed of seven alpha subunits. The catalytic chamber with the active sites is on the inside of the barrel. Has a gated structure, the ends of the cylinder being occluded by the N-termini of the alpha-subunits. Is capped at one or both ends by the proteasome regulatory ATPase, PAN.

It localises to the cytoplasm. It catalyses the reaction Cleavage of peptide bonds with very broad specificity.. The formation of the proteasomal ATPase PAN-20S proteasome complex, via the docking of the C-termini of PAN into the intersubunit pockets in the alpha-rings, triggers opening of the gate for substrate entry. Interconversion between the open-gate and close-gate conformations leads to a dynamic regulation of the 20S proteasome proteolysis activity. Component of the proteasome core, a large protease complex with broad specificity involved in protein degradation. The chain is Proteasome subunit beta 1 from Ignicoccus hospitalis (strain KIN4/I / DSM 18386 / JCM 14125).